We begin with the raw amino-acid sequence, 413 residues long: Probable tRNA pseudouridine synthase D (413 aa).

The active-site Nucleophile is Asp97. One can recognise a TRUD domain in the interval 167-370; that stretch reads AAPNYYGYQR…YGTYRRVRLE (204 aa).

Belongs to the pseudouridine synthase TruD family.

The catalysed reaction is uridine(13) in tRNA = pseudouridine(13) in tRNA. Could be responsible for synthesis of pseudouridine from uracil-13 in transfer RNAs. This is Probable tRNA pseudouridine synthase D from Pyrobaculum aerophilum (strain ATCC 51768 / DSM 7523 / JCM 9630 / CIP 104966 / NBRC 100827 / IM2).